The chain runs to 59 residues: Preprotein translocase subunit SecG (59 aa).

At 1–33 (MARRESSGGSGGLMSSAGLMRYFEAEESAIKID) the chain is on the cytoplasmic side. Residues 34–55 (PKTVIIAAVASGAFIWILNFTY) form a helical membrane-spanning segment. Residues 56-59 (GRFW) lie on the Extracellular side of the membrane.

This sequence belongs to the SEC61-beta family. In terms of assembly, component of the protein translocase complex. Heterotrimer consisting of alpha (SecY), beta (SecG) and gamma (SecE) subunits. Can form oligomers of the heterotrimer.

Its subcellular location is the cell membrane. Its function is as follows. Involved in protein export. The function of the beta subunit is unknown, but it may be involved in stabilization of the trimeric complex. In Methanocella arvoryzae (strain DSM 22066 / NBRC 105507 / MRE50), this protein is Preprotein translocase subunit SecG.